Here is a 64-residue protein sequence, read N- to C-terminus: DNA gyrase inhibitor YacG (64 aa).

Residues cysteine 9, cysteine 12, cysteine 28, and cysteine 32 each contribute to the Zn(2+) site. Residues lysine 45 to lysine 64 are disordered. Positions serine 54–lysine 64 are enriched in acidic residues.

Belongs to the DNA gyrase inhibitor YacG family. As to quaternary structure, interacts with GyrB. It depends on Zn(2+) as a cofactor.

Inhibits all the catalytic activities of DNA gyrase by preventing its interaction with DNA. Acts by binding directly to the C-terminal domain of GyrB, which probably disrupts DNA binding by the gyrase. In Escherichia fergusonii (strain ATCC 35469 / DSM 13698 / CCUG 18766 / IAM 14443 / JCM 21226 / LMG 7866 / NBRC 102419 / NCTC 12128 / CDC 0568-73), this protein is DNA gyrase inhibitor YacG.